The chain runs to 253 residues: Phosphoribosylaminoimidazole-succinocarboxamide synthase (253 aa).

Belongs to the SAICAR synthetase family.

The catalysed reaction is 5-amino-1-(5-phospho-D-ribosyl)imidazole-4-carboxylate + L-aspartate + ATP = (2S)-2-[5-amino-1-(5-phospho-beta-D-ribosyl)imidazole-4-carboxamido]succinate + ADP + phosphate + 2 H(+). The protein operates within purine metabolism; IMP biosynthesis via de novo pathway; 5-amino-1-(5-phospho-D-ribosyl)imidazole-4-carboxamide from 5-amino-1-(5-phospho-D-ribosyl)imidazole-4-carboxylate: step 1/2. This Parvibaculum lavamentivorans (strain DS-1 / DSM 13023 / NCIMB 13966) protein is Phosphoribosylaminoimidazole-succinocarboxamide synthase.